The primary structure comprises 453 residues: UDP-glucosyltransferase avaP (453 aa).

Belongs to the UDP-glycosyltransferase family.

It participates in secondary metabolite biosynthesis. UDP-glucosyltransferase; part of the cluster that mediates the biosynthesis of a highly modified cyclo-arginine-tryptophan dipeptide (cRW). The first step of the pathway is perfornmed by the arginine-containing cyclodipeptide synthase (RCPDS) avaA that acts as the scaffold-generating enzyme and is responsible for formation of the cyclo-Arg-Trp (cRW) diketopiperazine. AvaB then acts as a multifunctional flavoenzyme that is responsible for generating the cyclo-Arg-formylkynurenine DKP, which can be deformylated by avaC. AvaB then further catalyzes an additional N-oxidation followed by cyclization and dehydration. The next step is an N-acetylation of the guanidine group catalyzed by the arginine N-acetyltransferase avaD. The roles of the additional enzymes identified within the ava cluster still have to be determined. The sequence is that of UDP-glucosyltransferase avaP from Aspergillus versicolor.